Reading from the N-terminus, the 497-residue chain is Probable cytosol aminopeptidase (497 aa).

Positions 263 and 268 each coordinate Mn(2+). Lys-275 is a catalytic residue. Positions 286, 345, and 347 each coordinate Mn(2+). The active site involves Arg-349.

The protein belongs to the peptidase M17 family. Requires Mn(2+) as cofactor.

Its subcellular location is the cytoplasm. It catalyses the reaction Release of an N-terminal amino acid, Xaa-|-Yaa-, in which Xaa is preferably Leu, but may be other amino acids including Pro although not Arg or Lys, and Yaa may be Pro. Amino acid amides and methyl esters are also readily hydrolyzed, but rates on arylamides are exceedingly low.. The catalysed reaction is Release of an N-terminal amino acid, preferentially leucine, but not glutamic or aspartic acids.. Presumably involved in the processing and regular turnover of intracellular proteins. Catalyzes the removal of unsubstituted N-terminal amino acids from various peptides. This chain is Probable cytosol aminopeptidase, found in Sinorhizobium fredii (strain NBRC 101917 / NGR234).